Here is a 338-residue protein sequence, read N- to C-terminus: MAHVAEWKKKEVEELTKLLQDYPVIALVDVADVPAYPLSKMRESLRDKAVLRVSRNTLIELALKKAAQELNDSNLEKLIEHIQGGTGILVTKINPFKLYKFLEESKKPAPAKAGAPAPRDVVVPAGPTPLSPGPLVGEMQALGIPARIEKGKVSIQKDTVVLKAGEIITPQLANILNQLGIEPLEVGLKLLAAYEHGIVYTPEVLAIDEEQYISMLQQAYMHAFNLSVNVAYPTKQTIEAIIQKAFLGAKNVAVEAGYITKESAGDILGKAFRIALLIAQELPEELLDEKTKELLNQQAQVIAAQPQPAEEAEEKVEEEEEEEKEEEEALAGLGALFG.

Residues 302–338 (IAAQPQPAEEAEEKVEEEEEEEKEEEEALAGLGALFG) are disordered. The segment covering 310–329 (EEAEEKVEEEEEEEKEEEEA) has biased composition (acidic residues).

This sequence belongs to the universal ribosomal protein uL10 family. As to quaternary structure, part of the 50S ribosomal subunit. Forms part of the ribosomal stalk which helps the ribosome interact with GTP-bound translation factors. Forms a heptameric L10(L12)2(L12)2(L12)2 complex, where L10 forms an elongated spine to which the L12 dimers bind in a sequential fashion.

Forms part of the ribosomal stalk, playing a central role in the interaction of the ribosome with GTP-bound translation factors. In Thermococcus sibiricus (strain DSM 12597 / MM 739), this protein is Large ribosomal subunit protein uL10.